The sequence spans 286 residues: Bifunctional protein FolD (286 aa).

NADP(+) is bound by residues 165–167 (GRS), Ser-190, and Val-231.

The protein belongs to the tetrahydrofolate dehydrogenase/cyclohydrolase family. As to quaternary structure, homodimer.

The catalysed reaction is (6R)-5,10-methylene-5,6,7,8-tetrahydrofolate + NADP(+) = (6R)-5,10-methenyltetrahydrofolate + NADPH. It carries out the reaction (6R)-5,10-methenyltetrahydrofolate + H2O = (6R)-10-formyltetrahydrofolate + H(+). It functions in the pathway one-carbon metabolism; tetrahydrofolate interconversion. Functionally, catalyzes the oxidation of 5,10-methylenetetrahydrofolate to 5,10-methenyltetrahydrofolate and then the hydrolysis of 5,10-methenyltetrahydrofolate to 10-formyltetrahydrofolate. This Bacillus cereus (strain ZK / E33L) protein is Bifunctional protein FolD.